A 337-amino-acid polypeptide reads, in one-letter code: Glyceraldehyde-3-phosphate dehydrogenase 2 (337 aa).

Residues 11-12, Asp35, Arg80, and Thr122 contribute to the NADP(+) site; that span reads RI. Residues 153-155, Thr184, Arg199, 212-213, and Arg235 each bind D-glyceraldehyde 3-phosphate; these read SCT and TG. Cys154 acts as the Nucleophile in catalysis. NADP(+) is bound at residue Asn317.

Belongs to the glyceraldehyde-3-phosphate dehydrogenase family. As to quaternary structure, homotetramer.

The protein resides in the cytoplasm. It catalyses the reaction D-glyceraldehyde 3-phosphate + phosphate + NADP(+) = (2R)-3-phospho-glyceroyl phosphate + NADPH + H(+). The enzyme catalyses D-glyceraldehyde 3-phosphate + phosphate + NAD(+) = (2R)-3-phospho-glyceroyl phosphate + NADH + H(+). The protein operates within carbohydrate biosynthesis; Calvin cycle. Gap2 has a major role in carbon fixation as a component of the Calvin cycle. Catalyzes the oxidative phosphorylation of glyceraldehyde 3-phosphate (G3P) to 1,3-bisphosphoglycerate (BPG) using the cofactor NAD. The first reaction step involves the formation of a hemiacetal intermediate between G3P and a cysteine residue, and this hemiacetal intermediate is then oxidized to a thioester, with concomitant reduction of NAD to NADH. The reduced NADH is then exchanged with the second NAD, and the thioester is attacked by a nucleophilic inorganic phosphate to produce BPG. The polypeptide is Glyceraldehyde-3-phosphate dehydrogenase 2 (gap2) (Trichormus variabilis (strain ATCC 29413 / PCC 7937) (Anabaena variabilis)).